The following is a 318-amino-acid chain: Aquaporin-1 (318 aa).

A compositionally biased stretch (polar residues) spans 1-16; it reads MVQFGSRANTNMTGLP. The interval 1 to 27 is disordered; the sequence is MVQFGSRANTNMTGLPTEQAVEDRRVG. The Cytoplasmic portion of the chain corresponds to 1 to 36; sequence MVQFGSRANTNMTGLPTEQAVEDRRVGNPKRDRMRN. The chain crosses the membrane as a helical span at residues 37 to 57; the sequence is ALVIVLGEFCGTFMFLLLSFI. The Extracellular portion of the chain corresponds to 58 to 77; the sequence is GAQTALVTNSPSDAGSPLLP. The helical transmembrane segment at 78–98 threads the bilayer; the sequence is FSLMYIAASFGTALAVNVWIF. Over 99 to 108 the chain is Cytoplasmic; sequence YRVSGGMFNP. The NPA 1 motif lies at 107–109; the sequence is NPA. Residues 109 to 129 traverse the membrane as a helical segment; the sequence is AVTLGLVLVGAVTPIHALLII. Topologically, residues 130–165 are extracellular; it reads PTQLVAAITAAGITDALLPGKLLVTNALGNGTSVAQ. The N-linked (GlcNAc...) asparagine glycan is linked to asparagine 159. Residues 166–186 traverse the membrane as a helical segment; it reads GVFIEMFLTSQLVLTVYFLAV. Over 187–193 the chain is Cytoplasmic; that stretch reads EKHRSTH. The helical transmembrane segment at 194–214 threads the bilayer; the sequence is LAPIGIGISVFIAHICATNWT. Residues 215–236 lie on the Extracellular side of the membrane; that stretch reads GTSINPARSFGPSVVAGFHGYD. The NPA 2 motif lies at 219–221; sequence NPA. A helical membrane pass occupies residues 237 to 257; that stretch reads WIYYIGPFMGSLLAFGCYKIF. Residues 258–318 are Cytoplasmic-facing; sequence KVLEYQTANP…NDSVIDDQMV (61 aa). Residues 268 to 318 form a disordered region; sequence GQDDDNLDRSGHHHFFGHRKEPMPHTHTDNIEPKDHGVPQRNDSVIDDQMV. Over residues 285–305 the composition is skewed to basic and acidic residues; sequence HRKEPMPHTHTDNIEPKDHGV.

Belongs to the MIP/aquaporin (TC 1.A.8) family.

Its subcellular location is the nucleus membrane. It carries out the reaction H2O(in) = H2O(out). Probable water channel involved in responses to changes in environmental conditions and conidiation. Involved in responses to hyperosmotic conditions, oxidative stress and cell wall destabilization. Also required for proper transcriptional activation of genes involved in aurofusarin biosynthesis. Not involved in pathogenicity, but negatively regulates deoxynivalenol (DON) production. This chain is Aquaporin-1, found in Gibberella zeae (strain ATCC MYA-4620 / CBS 123657 / FGSC 9075 / NRRL 31084 / PH-1) (Wheat head blight fungus).